The following is a 454-amino-acid chain: UDP-N-acetylmuramoyl-tripeptide--D-alanyl-D-alanine ligase (454 aa).

116–122 lines the ATP pocket; sequence GSVGKTT.

The protein belongs to the MurCDEF family. MurF subfamily.

The protein resides in the cytoplasm. The catalysed reaction is D-alanyl-D-alanine + UDP-N-acetyl-alpha-D-muramoyl-L-alanyl-gamma-D-glutamyl-meso-2,6-diaminopimelate + ATP = UDP-N-acetyl-alpha-D-muramoyl-L-alanyl-gamma-D-glutamyl-meso-2,6-diaminopimeloyl-D-alanyl-D-alanine + ADP + phosphate + H(+). The protein operates within cell wall biogenesis; peptidoglycan biosynthesis. In terms of biological role, involved in cell wall formation. Catalyzes the final step in the synthesis of UDP-N-acetylmuramoyl-pentapeptide, the precursor of murein. The protein is UDP-N-acetylmuramoyl-tripeptide--D-alanyl-D-alanine ligase of Synechocystis sp. (strain ATCC 27184 / PCC 6803 / Kazusa).